A 107-amino-acid polypeptide reads, in one-letter code: UPF0102 protein Tlet_0667 (107 aa).

This sequence belongs to the UPF0102 family.

In Pseudothermotoga lettingae (strain ATCC BAA-301 / DSM 14385 / NBRC 107922 / TMO) (Thermotoga lettingae), this protein is UPF0102 protein Tlet_0667.